Reading from the N-terminus, the 277-residue chain is Ribosomally synthesized cyclic peptide asperipin-2a precursor aprA (277 aa).

The signal sequence occupies residues 1–19 (MHLSRYIAVLLSASSFVSA). Propeptides lie at residues 20 to 69 (LPLQ…LDKR), 76 to 88 (KRNA…LDKR), 95 to 107 (KRNA…LDKR), 114 to 126 (KRNA…LDKR), 133 to 145 (KRNA…LDKR), 152 to 164 (KRNA…LDKR), 171 to 183 (KRNA…LDKR), 190 to 202 (KRNA…LDKR), 209 to 221 (KRNA…LDKR), 228 to 240 (KRNA…LDKR), 247 to 259 (KRNA…LDKR), and 266 to 277 (KRNAETPEDLDK).

Post-translationally, aprA is processed by kexin proteases to produce 11 identical copies of the hexapeptide Phe-Tyr-Tyr-Thr-Gly-Tyr, that is further modified aprY and aprR to yield asperipin-2a. The bicyclic structure of asperipin-2a is likely synthesized by the single ustYa family oxidase aprY. The reductase aprR may be required for the final reduction to yield asperipin-2a.

It functions in the pathway secondary metabolite biosynthesis. Ribosomally synthesized cyclic peptide asperipin-2a precursor; part of the gene cluster that mediates the biosynthesis of the asperipin-2a, a bicyclic peptide that possesses two macrocyclic ether rings consisting of 14- and 17-membered paracyclophans. The aprA translated product contains a 11-fold repeated peptide embedding the hexapeptide Phe-Tyr-Tyr-Thr-Gly-Tyr, that is converted into asperipin-2a. After being excised from the precursor peptide by kexin proteases, the core peptides are cyclized and modified post-translationally by enzymes encoded within the corresponding gene cluster. This Aspergillus flavus (strain ATCC 200026 / FGSC A1120 / IAM 13836 / NRRL 3357 / JCM 12722 / SRRC 167) protein is Ribosomally synthesized cyclic peptide asperipin-2a precursor aprA.